A 368-amino-acid polypeptide reads, in one-letter code: tRNA-specific 2-thiouridylase MnmA (368 aa).

ATP contacts are provided by residues 10 to 17 (AMSGGIDS) and M36. C106 serves as the catalytic Nucleophile. An intrachain disulfide couples C106 to C203. ATP is bound at residue G130. Positions 152 to 154 (KDQ) are interaction with tRNA. The active-site Cysteine persulfide intermediate is the C203. The interval 313–314 (RY) is interaction with tRNA.

It belongs to the MnmA/TRMU family.

It localises to the cytoplasm. It carries out the reaction S-sulfanyl-L-cysteinyl-[protein] + uridine(34) in tRNA + AH2 + ATP = 2-thiouridine(34) in tRNA + L-cysteinyl-[protein] + A + AMP + diphosphate + H(+). Functionally, catalyzes the 2-thiolation of uridine at the wobble position (U34) of tRNA, leading to the formation of s(2)U34. This chain is tRNA-specific 2-thiouridylase MnmA, found in Cytophaga hutchinsonii (strain ATCC 33406 / DSM 1761 / CIP 103989 / NBRC 15051 / NCIMB 9469 / D465).